Here is a 381-residue protein sequence, read N- to C-terminus: Cytosolic acyl coenzyme A thioester hydrolase (381 aa).

One can recognise a HotDog ACOT-type 1 domain in the interval 51–169 (PGHCIAMGRI…TLWYVPLSLK (119 aa)). N67 is a catalytic residue. Residues K169 and K199 each carry the N6-acetyllysine modification. One can recognise a HotDog ACOT-type 2 domain in the interval 225 to 339 (SYSQSSLIHL…FFTYVSLNQE (115 aa)). D256 is a catalytic residue. At K284 the chain carries N6-acetyllysine. Residues 343–381 (LPVPQLVPETEDEKKRFEEGKGRYLQMKAKRQGHTEPQP) form a disordered region. The span at 354–364 (DEKKRFEEGKG) shows a compositional bias: basic and acidic residues.

Homohexamer. In terms of processing, the N-terminus is blocked. Isoform 1 is expressed constitutively in brain and testis. Isoform 2 is induced in liver by treatment with the peroxisome proliferator.

Its subcellular location is the cytoplasm. It localises to the cytosol. It carries out the reaction hexadecanoyl-CoA + H2O = hexadecanoate + CoA + H(+). The catalysed reaction is dodecanoyl-CoA + H2O = dodecanoate + CoA + H(+). The enzyme catalyses tetradecanoyl-CoA + H2O = tetradecanoate + CoA + H(+). It catalyses the reaction decanoyl-CoA + H2O = decanoate + CoA + H(+). It carries out the reaction octanoyl-CoA + H2O = octanoate + CoA + H(+). The catalysed reaction is octadecanoyl-CoA + H2O = octadecanoate + CoA + H(+). The enzyme catalyses (9Z)-octadecenoyl-CoA + H2O = (9Z)-octadecenoate + CoA + H(+). The protein operates within lipid metabolism; fatty acid metabolism. Catalyzes the hydrolysis of acyl-CoAs into free fatty acids and coenzyme A (CoASH), regulating their respective intracellular levels. Preferentially hydrolyzes palmitoyl-CoA, but has a broad specificity acting on other fatty acyl-CoAs with chain-lengths of C8-C18. May play an important physiological function in brain. The sequence is that of Cytosolic acyl coenzyme A thioester hydrolase (Acot7) from Rattus norvegicus (Rat).